A 375-amino-acid chain; its full sequence is Succinyl-diaminopimelate desuccinylase (375 aa).

Residue histidine 66 participates in Zn(2+) binding. Residue aspartate 68 is part of the active site. Aspartate 99 serves as a coordination point for Zn(2+). Glutamate 133 acts as the Proton acceptor in catalysis. Residues glutamate 134, glutamate 162, and histidine 348 each coordinate Zn(2+).

The protein belongs to the peptidase M20A family. DapE subfamily. As to quaternary structure, homodimer. Requires Zn(2+) as cofactor. Co(2+) serves as cofactor.

The catalysed reaction is N-succinyl-(2S,6S)-2,6-diaminopimelate + H2O = (2S,6S)-2,6-diaminopimelate + succinate. The protein operates within amino-acid biosynthesis; L-lysine biosynthesis via DAP pathway; LL-2,6-diaminopimelate from (S)-tetrahydrodipicolinate (succinylase route): step 3/3. Functionally, catalyzes the hydrolysis of N-succinyl-L,L-diaminopimelic acid (SDAP), forming succinate and LL-2,6-diaminopimelate (DAP), an intermediate involved in the bacterial biosynthesis of lysine and meso-diaminopimelic acid, an essential component of bacterial cell walls. This Escherichia coli O6:K15:H31 (strain 536 / UPEC) protein is Succinyl-diaminopimelate desuccinylase.